Reading from the N-terminus, the 425-residue chain is Enolase (425 aa).

Glutamine 162 contributes to the (2R)-2-phosphoglycerate binding site. Glutamate 204 serves as the catalytic Proton donor. Residues aspartate 241, glutamate 284, and aspartate 311 each contribute to the Mg(2+) site. Residues lysine 336, arginine 365, serine 366, and lysine 387 each contribute to the (2R)-2-phosphoglycerate site. Residue lysine 336 is the Proton acceptor of the active site.

Belongs to the enolase family. The cofactor is Mg(2+).

Its subcellular location is the cytoplasm. The protein localises to the secreted. It is found in the cell surface. It carries out the reaction (2R)-2-phosphoglycerate = phosphoenolpyruvate + H2O. Its pathway is carbohydrate degradation; glycolysis; pyruvate from D-glyceraldehyde 3-phosphate: step 4/5. Catalyzes the reversible conversion of 2-phosphoglycerate (2-PG) into phosphoenolpyruvate (PEP). It is essential for the degradation of carbohydrates via glycolysis. This Brucella abortus (strain S19) protein is Enolase.